We begin with the raw amino-acid sequence, 55 residues long: Riparin-1.4 (55 aa).

Residues 1–15 (MKIIVVLAVLMLVSA) form the signal peptide. A propeptide spanning residues 16–41 (QVCLVSAAEMGHSSDNELSSRDLVKR) is cleaved from the precursor. Cys47 and Cys53 are oxidised to a cystine. A propeptide spanning residues 54–55 (NH) is cleaved from the precursor.

As to expression, expressed by the skin glands.

It localises to the secreted. The protein is Riparin-1.4 of Crinia riparia (Streambank froglet).